A 421-amino-acid polypeptide reads, in one-letter code: Histidine--tRNA ligase (421 aa).

This sequence belongs to the class-II aminoacyl-tRNA synthetase family. Homodimer.

Its subcellular location is the cytoplasm. The catalysed reaction is tRNA(His) + L-histidine + ATP = L-histidyl-tRNA(His) + AMP + diphosphate + H(+). The chain is Histidine--tRNA ligase from Coxiella burnetii (strain Dugway 5J108-111).